A 145-amino-acid polypeptide reads, in one-letter code: Small ribosomal subunit protein eS19 (145 aa).

Belongs to the eukaryotic ribosomal protein eS19 family. Part of the 30S ribosomal subunit.

May be involved in maturation of the 30S ribosomal subunit. This Methanothermobacter thermautotrophicus (strain ATCC 29096 / DSM 1053 / JCM 10044 / NBRC 100330 / Delta H) (Methanobacterium thermoautotrophicum) protein is Small ribosomal subunit protein eS19.